Here is a 309-residue protein sequence, read N- to C-terminus: HPr kinase/phosphorylase (309 aa).

Catalysis depends on residues H138 and K159. Position 153–160 (153–160 (GDSGIGKS)) interacts with ATP. A Mg(2+)-binding site is contributed by S160. D177 (proton acceptor; for phosphorylation activity. Proton donor; for dephosphorylation activity) is an active-site residue. An important for the catalytic mechanism of both phosphorylation and dephosphorylation region spans residues 201-210 (LEIRGVGIID). Position 202 (E202) interacts with Mg(2+). The active site involves R243. An important for the catalytic mechanism of dephosphorylation region spans residues 264 to 269 (PVKTGR).

The protein belongs to the HPrK/P family. Homohexamer. It depends on Mg(2+) as a cofactor.

The enzyme catalyses [HPr protein]-L-serine + ATP = [HPr protein]-O-phospho-L-serine + ADP + H(+). The catalysed reaction is [HPr protein]-O-phospho-L-serine + phosphate + H(+) = [HPr protein]-L-serine + diphosphate. With respect to regulation, kinase activity is slightly activated by fructose 1,6-bisphosphate (FBP) at low ATP concentrations, and is inhibited by inorganic phosphate (Pi). Moreover, FBP, phosphoenolpyruvate and 2-phosphoglycerate, but not fructose 1-P, fructose 6-P, and ribulose 1,5-bisphosphate protect kinase activity against inhibition by Pi. Dephosphorylation of P-Ser-HPr by S.salivarius HPrK/P is strictly dependent on the presence of Pi, and is inhibited by FBP. FBP seems to modulate HPrK/P activities by enhancing affinity of the active site for ATP and, conversely, lowering the affinity for Pi. Catalyzes the ATP- as well as probably the pyrophosphate-dependent phosphorylation of 'Ser-46' in HPr, a phosphocarrier protein of the phosphoenolpyruvate-dependent sugar phosphotransferase system (PTS). HprK/P also catalyzes the pyrophosphate-producing, inorganic phosphate-dependent dephosphorylation (phosphorolysis) of seryl-phosphorylated HPr (P-Ser-HPr). The two antagonistic activities of HprK/P are regulated by several intracellular metabolites, which change their concentration in response to the absence or presence of rapidly metabolisable carbon sources (glucose, fructose, etc.) in the growth medium. Therefore, by controlling the phosphorylation state of HPr, the bifunctional HPr kinase/phosphorylase is a sensor enzyme that plays a major role in the regulation of carbon metabolism and sugar transport: it probably mediates carbon catabolite repression (CCR), and regulates PTS-catalyzed carbohydrate uptake and inducer exclusion. The sequence is that of HPr kinase/phosphorylase (hprK) from Streptococcus salivarius.